A 634-amino-acid polypeptide reads, in one-letter code: Chaperone protein HtpG (634 aa).

Residues 1-342 are a; substrate-binding; it reads MTVETDKQTL…SSDLSLNVSR (342 aa). A b region spans residues 343-559; that stretch reads EILQSGPVVD…QGDLGLQMRQ (217 aa). Residues 560-634 are c; sequence LLEASGQAVP…LNKLLLELSV (75 aa).

This sequence belongs to the heat shock protein 90 family. In terms of assembly, homodimer.

It localises to the cytoplasm. Functionally, molecular chaperone. Has ATPase activity. In Xanthomonas euvesicatoria pv. vesicatoria (strain 85-10) (Xanthomonas campestris pv. vesicatoria), this protein is Chaperone protein HtpG.